The chain runs to 189 residues: Interferon alpha-5 (189 aa).

The first 23 residues, 1–23 (MARLCAFLMVLPVLSYWPTCSLG), serve as a signal peptide directing secretion. Cystine bridges form between C24–C122 and C52–C162. The N-linked (GlcNAc...) asparagine glycan is linked to N101.

Belongs to the alpha/beta interferon family.

The protein localises to the secreted. Its function is as follows. Produced by macrophages, IFN-alpha have antiviral activities. Interferon stimulates the production of two enzymes: a protein kinase and an oligoadenylate synthetase. The protein is Interferon alpha-5 (Ifna5) of Mus musculus (Mouse).